Here is a 91-residue protein sequence, read N- to C-terminus: Acylphosphatase (91 aa).

An Acylphosphatase-like domain is found at 6-91 (CMRCYISGRV…WKDYISFDVL (86 aa)). Residues Arg-21 and Asn-39 contribute to the active site.

This sequence belongs to the acylphosphatase family.

The enzyme catalyses an acyl phosphate + H2O = a carboxylate + phosphate + H(+). This Legionella pneumophila (strain Paris) protein is Acylphosphatase (acyP).